Consider the following 264-residue polypeptide: 3-methyl-2-oxobutanoate hydroxymethyltransferase (264 aa).

Residues Asp-45 and Asp-84 each contribute to the Mg(2+) site. 3-methyl-2-oxobutanoate contacts are provided by residues 45–46, Asp-84, and Lys-112; that span reads DS. Mg(2+) is bound at residue Glu-114. Glu-181 functions as the Proton acceptor in the catalytic mechanism.

It belongs to the PanB family. Homodecamer; pentamer of dimers. Mg(2+) serves as cofactor.

It localises to the cytoplasm. The enzyme catalyses 3-methyl-2-oxobutanoate + (6R)-5,10-methylene-5,6,7,8-tetrahydrofolate + H2O = 2-dehydropantoate + (6S)-5,6,7,8-tetrahydrofolate. The protein operates within cofactor biosynthesis; (R)-pantothenate biosynthesis; (R)-pantoate from 3-methyl-2-oxobutanoate: step 1/2. Its function is as follows. Catalyzes the reversible reaction in which hydroxymethyl group from 5,10-methylenetetrahydrofolate is transferred onto alpha-ketoisovalerate to form ketopantoate. The chain is 3-methyl-2-oxobutanoate hydroxymethyltransferase from Shigella sonnei (strain Ss046).